The chain runs to 736 residues: MSQHELDIASSPGDVRPWIRYISSVKNDKTTARQKCILFERAVTALPRSYKLWKEYLDFRSGLCTGLNPIKHADEYDRVNALYEKSLVLLHKMPVIWLQYLQFLMLQPKVTKTRSVINEALRSLPVQQHPRVLKLALQFGTKVGGPTSVQIWKRYVLAYPDQKETMAQSLIKMGYHGEAAVVLIELLNASGDNYALWTELVDLIGESDKLTLEPPVEQIISSGIKRFPDQRGPLTVQLANFLVRNGDLESARDVFEDGITTANTVRDFTVVFDAYAEFEERIVTHLIENESPMADLRIAKLDHLLERRPFLISDVRLRREPYSVLEWQKRIALYEDPAETVAAYTEAVQSIPPAKADGKLSQLWISWAKFYAEDRETACEIYHKATLVPYKSVSELADVYLAWSQYESENDHWENAVKIIKQALESPNTHVSYHNSDLTAQDRIHKSVRLWSYYADLVESYGTFEETKQVYEKIMALDLLTPLFVVNYATLLEENDHFEEMFKVYEKGISLFEESAFEIWNLYLVKASPRLGLERLRDLFEDAISKFPTQKALYILYGKLEEDRGLVRNAMRVYSAMCDHVKTSETFKYYIGRTVENFGLAATRPVYDKALESLPNKDASELALDYAQMEEKLGEIDRARAIYGYGSQFSDPQIIKYYDAWHKFEVAHGTEDTFKDMLRIKRSIQAQFNTDIHYATTAAEVKKGTVQEFVKGETVQKGNIEPPVAQANEDEIELDI.

HAT repeat units follow at residues 1 to 27 (MSQH…SVKN), 30 to 62 (TTAR…FRSG), 74 to 106 (DEYD…FLML), 130 to 161 (PRVL…AYPD), 246 to 281 (GDLE…FEER), 339 to 373 (ETVA…FYAE), 377 to 409 (TACE…YESE), 428 to 460 (NTHV…LVES), 462 to 494 (GTFE…LLEE), 496 to 529 (DHFE…KASP), 531 to 563 (LGLE…LEED), 598 to 632 (FGLA…MEEK), and 634 to 667 (GEID…FEVA).

Belongs to the crooked-neck family. As to quaternary structure, associated with the spliceosome.

The protein resides in the nucleus. Involved in pre-mRNA splicing and cell cycle progression. This chain is Pre-mRNA-splicing factor SYF1 (SYF1), found in Yarrowia lipolytica (strain CLIB 122 / E 150) (Yeast).